A 75-amino-acid chain; its full sequence is Chaplin-D (75 aa).

The first 23 residues, 1 to 23 (MKKSAAVVAGAIMALGMAAPAFA), serve as a signal peptide directing secretion. Residues 34 to 74 (SPGVLSGNVIQVPVHVPVNVCGNSINVVGLLNPAFGNKCEN) enclose the Chaplin domain. An intrachain disulfide couples Cys-54 to Cys-72.

The protein belongs to the chaplin family. Short chaplin subfamily.

It localises to the cell surface. Its subcellular location is the secreted. It is found in the cell wall. The protein localises to the fimbrium. Its function is as follows. One of 8 partially redundant surface-active proteins required for efficient formation of aerial mycelium; the short chaplins assemble into a hydrophobic, amyloidal fibrillar surface layer that envelopes and protects aerial hyphae and spores, presumably anchored to the long chaplins. Chaplins have an overlapping function with the surface-active SapB peptide; chaplins are essential on minimal medium while on rich medium both chaplins and SapB are required for efficient aerial hyphae formation. Chaplins are also involved in cell attachment to a hydrophobic surface. Forms amyloid fibrils in vitro probably composed of stacked beta-sheets, at low extracellular concentrations individually restores the ability to form aerial hyphae to a chaplin-deficient strain. A small chaplin extract (ChpD, ChpE, ChpF, ChpG and ChpH) self-assembles into 2 different amyloids; small fibrils at the air-water interface form an amphipathic membrane that resembles spore-surface structures involved in aerial hyphae formation, and hydrophilic fibrils in solution that resemble the fibers that attach cells to a hydrophobic surface. At the air-water interface the hydrophilic surface is in contact with water (probably equivalent to the peptidoglycan layer), while the hydrophobic face is exposed to the air, making the surface of the aerial hyphae hydrophobic. A minimal chaplin strain capable of forming aerial mycelium/hyphae on minimal medium contains ChpC, ChpE and ChpH. The strain also has restored rodlet formation on the hyphae surface. A second minimal chaplin strain with ChpA, ChpD and ChpE makes slightly less robust hyphae. A small chaplin extract applied to a chaplin-deficient strain restores aerial hyphae formation. The small chaplin extract forms an amyloid-like structure similar to that seen on the surface of cells without rodlets (rdlA-rdlB deletions), and is highly surface active, reducing surface tension from 72 to 26 mJ/m(2), which probably allows escape of hyphae from an aqueous environment into air. The protein is Chaplin-D of Streptomyces coelicolor (strain ATCC BAA-471 / A3(2) / M145).